We begin with the raw amino-acid sequence, 244 residues long: MFRSLLVAAAQRPQAPGPGPPRPPPPAGPAAEALEAQFSCPICLEVFHRAVGIAGCGHTFCGECLQPCLQVPSPLCPLCRMPFDPKKVEKASSVEKQLSSYKAPCRGCSKKVTLAKMRSHVSSCAKVQEQMANCPKFVPVVPTSQPIPSNIPNRSTFVCPYCGARNLDQQELVKHCMENHRNDPNKVVCPVCSAMPWGDPSYKSANFLQHLLHRHKFSYDTFVDYNIDEEAALQAALALSLSEN.

Residues 10-30 (AQRPQAPGPGPPRPPPPAGPA) are disordered. Residues 15-28 (APGPGPPRPPPPAG) are compositionally biased toward pro residues. Residues 40–80 (CPICLEVFHRAVGIAGCGHTFCGECLQPCLQVPSPLCPLCR) form an RING-type zinc finger. Residues Cys-105, Cys-108, His-120, and Cys-124 each contribute to the Zn(2+) site. The C2HC RNF-type zinc-finger motif lies at 105–124 (CRGCSKKVTLAKMRSHVSSC). One can recognise a UIM domain in the interval 228–244 (DEEAALQAALALSLSEN).

It localises to the cytoplasm. The catalysed reaction is S-ubiquitinyl-[E2 ubiquitin-conjugating enzyme]-L-cysteine + [acceptor protein]-L-lysine = [E2 ubiquitin-conjugating enzyme]-L-cysteine + N(6)-ubiquitinyl-[acceptor protein]-L-lysine.. It functions in the pathway protein modification; protein ubiquitination. Its function is as follows. E3 ubiquitin-protein ligase that promotes the ubiquitination of different substrates. This Gallus gallus (Chicken) protein is E3 ubiquitin-protein ligase RNF166 (RNF166).